A 246-amino-acid chain; its full sequence is MKYDIIGDIHGCFQEFQNLTEKLGYNWSSGLPVHPDQRKLAFVGDITDRGPHSLRMIEIVWELVIHKKEAYYAPGNHCNKLYRFFLGRNVTVAHGLETTVAEYEALPSHKQNIIKEKFITLYEQSPLYHILDEKRVIVCHAGIRQDYIGRRDKKVQTFVLYGDITGEKHADGSPVRRDWAQEYKGQAWIVYGHTPVAEPRFVNQTVNIDTGAVFGGKLTGLRYPEMETISVPSSLPFVAEKFRPIS.

The protein belongs to the PrpE family. Ni(2+) serves as cofactor.

The catalysed reaction is P(1),P(4)-bis(5'-guanosyl) tetraphosphate + H2O = GMP + GTP + 2 H(+). Asymmetrically hydrolyzes Ap4p to yield AMP and ATP. In Bacillus cereus (strain ATCC 14579 / DSM 31 / CCUG 7414 / JCM 2152 / NBRC 15305 / NCIMB 9373 / NCTC 2599 / NRRL B-3711), this protein is Bis(5'-nucleosyl)-tetraphosphatase PrpE [asymmetrical].